Consider the following 113-residue polypeptide: Large ribosomal subunit protein uL22 (113 aa).

This sequence belongs to the universal ribosomal protein uL22 family. Part of the 50S ribosomal subunit.

Functionally, this protein binds specifically to 23S rRNA; its binding is stimulated by other ribosomal proteins, e.g. L4, L17, and L20. It is important during the early stages of 50S assembly. It makes multiple contacts with different domains of the 23S rRNA in the assembled 50S subunit and ribosome. In terms of biological role, the globular domain of the protein is located near the polypeptide exit tunnel on the outside of the subunit, while an extended beta-hairpin is found that lines the wall of the exit tunnel in the center of the 70S ribosome. The sequence is that of Large ribosomal subunit protein uL22 from Mycoplasmopsis synoviae (strain 53) (Mycoplasma synoviae).